Reading from the N-terminus, the 388-residue chain is Coproporphyrin III ferrochelatase (388 aa).

Ser-59 and Tyr-124 together coordinate Fe-coproporphyrin III. 2 residues coordinate Fe(2+): His-186 and Glu-276. The disordered stretch occupies residues 349–369 (QSPQHASRAVTDAAATGRRGD).

It belongs to the ferrochelatase family.

Its subcellular location is the cytoplasm. It catalyses the reaction Fe-coproporphyrin III + 2 H(+) = coproporphyrin III + Fe(2+). It participates in porphyrin-containing compound metabolism; protoheme biosynthesis. Its function is as follows. Involved in coproporphyrin-dependent heme b biosynthesis. Catalyzes the insertion of ferrous iron into coproporphyrin III to form Fe-coproporphyrin III. The protein is Coproporphyrin III ferrochelatase of Frankia alni (strain DSM 45986 / CECT 9034 / ACN14a).